Here is a 47-residue protein sequence, read N- to C-terminus: Large ribosomal subunit protein eL40 (47 aa).

It belongs to the eukaryotic ribosomal protein eL40 family.

The protein is Large ribosomal subunit protein eL40 of Methanococcus maripaludis (strain C5 / ATCC BAA-1333).